We begin with the raw amino-acid sequence, 62 residues long: MTQHLHFRCPCCHGSQYRTSAFDVTERNPLGAKCIFCKSTMITFDNVALQIRTDHAPLDFTK.

It belongs to the YmcF/YnqF peptide family.

The protein is Protein YmcF of Escherichia coli (strain K12).